Consider the following 336-residue polypeptide: UPF0284 protein Pcal_1534 (336 aa).

The protein belongs to the UPF0284 family.

This Pyrobaculum calidifontis (strain DSM 21063 / JCM 11548 / VA1) protein is UPF0284 protein Pcal_1534.